The sequence spans 638 residues: DNA gyrase subunit B (638 aa).

A Toprim domain is found at 423-537; the sequence is CEVYIVEGDS…KGHVYLAMPP (115 aa). Mg(2+) contacts are provided by glutamate 429, aspartate 502, and aspartate 504.

Belongs to the type II topoisomerase GyrB family. Heterotetramer, composed of two GyrA and two GyrB chains. In the heterotetramer, GyrA contains the active site tyrosine that forms a transient covalent intermediate with DNA, while GyrB binds cofactors and catalyzes ATP hydrolysis. It depends on Mg(2+) as a cofactor. Mn(2+) serves as cofactor. The cofactor is Ca(2+).

It localises to the cytoplasm. The enzyme catalyses ATP-dependent breakage, passage and rejoining of double-stranded DNA.. In terms of biological role, a type II topoisomerase that negatively supercoils closed circular double-stranded (ds) DNA in an ATP-dependent manner to modulate DNA topology and maintain chromosomes in an underwound state. Negative supercoiling favors strand separation, and DNA replication, transcription, recombination and repair, all of which involve strand separation. Also able to catalyze the interconversion of other topological isomers of dsDNA rings, including catenanes and knotted rings. Type II topoisomerases break and join 2 DNA strands simultaneously in an ATP-dependent manner. This chain is DNA gyrase subunit B, found in Treponema denticola (strain ATCC 35405 / DSM 14222 / CIP 103919 / JCM 8153 / KCTC 15104).